The primary structure comprises 337 residues: Tryptophan--tRNA ligase (337 aa).

ATP contacts are provided by residues 11–13 (QPT) and 19–20 (GN). The 'HIGH' region signature appears at 12–20 (PTGNLHLGN). Residue Asp-135 participates in L-tryptophan binding. Residues 147-149 (GED), Val-190, and 199-203 (KMSKS) contribute to the ATP site. The 'KMSKS' region signature appears at 199-203 (KMSKS).

It belongs to the class-I aminoacyl-tRNA synthetase family. As to quaternary structure, homodimer.

Its subcellular location is the cytoplasm. The catalysed reaction is tRNA(Trp) + L-tryptophan + ATP = L-tryptophyl-tRNA(Trp) + AMP + diphosphate + H(+). Functionally, catalyzes the attachment of tryptophan to tRNA(Trp). The polypeptide is Tryptophan--tRNA ligase (Synechocystis sp. (strain ATCC 27184 / PCC 6803 / Kazusa)).